Consider the following 111-residue polypeptide: Universal stress protein B (111 aa).

The next 2 membrane-spanning stretches (helical) occupy residues 1 to 21 and 90 to 110; these read MISTVALFWALCVVCIVNMAR and FILTSALCGLVVVSMVALLIW.

It belongs to the universal stress protein B family.

Its subcellular location is the cell inner membrane. This chain is Universal stress protein B, found in Enterobacter sp. (strain 638).